Consider the following 318-residue polypeptide: Thymidylate synthase (318 aa).

Residues Arg-26 and 181 to 182 (RR) contribute to the dUMP site. Residue Cys-201 is the Nucleophile of the active site. Residues 221-224 (RSAD), Asn-232, and 262-264 (HIY) each bind dUMP. A (6R)-5,10-methylene-5,6,7,8-tetrahydrofolate-binding site is contributed by Asp-224. Ala-317 provides a ligand contact to (6R)-5,10-methylene-5,6,7,8-tetrahydrofolate.

This sequence belongs to the thymidylate synthase family. Bacterial-type ThyA subfamily. As to quaternary structure, homodimer.

Its subcellular location is the cytoplasm. It catalyses the reaction dUMP + (6R)-5,10-methylene-5,6,7,8-tetrahydrofolate = 7,8-dihydrofolate + dTMP. The protein operates within pyrimidine metabolism; dTTP biosynthesis. Its function is as follows. Catalyzes the reductive methylation of 2'-deoxyuridine-5'-monophosphate (dUMP) to 2'-deoxythymidine-5'-monophosphate (dTMP) while utilizing 5,10-methylenetetrahydrofolate (mTHF) as the methyl donor and reductant in the reaction, yielding dihydrofolate (DHF) as a by-product. This enzymatic reaction provides an intracellular de novo source of dTMP, an essential precursor for DNA biosynthesis. In Staphylococcus haemolyticus (strain JCSC1435), this protein is Thymidylate synthase.